A 382-amino-acid chain; its full sequence is Homeobox protein SHOOT MERISTEMLESS (382 aa).

The segment at 26 to 59 (MMMMMPPIMTSHQHHGHDHQHQQQEHDGYAYQSH) is disordered. The segment covering 44 to 53 (HQHQQQEHDG) has biased composition (basic and acidic residues). One can recognise an ELK domain in the interval 262-282 (ELKGQLLRKYSGYLGSLKQEF). Residues 283–346 (MKKRKKGKLP…NQRKRHWKPS (64 aa)) constitute a DNA-binding region (homeobox; TALE-type).

Belongs to the TALE/KNOX homeobox family. As to quaternary structure, forms homodimers. May form heterodimeric complexes with TALE/BELL proteins BEL1, BLH2, BLH3, BLH8/PNF, BLH9/PNY and ATH1. Interacts with CCT8. Binds to MBP2C; this interaction reduces RNA binding capacity. Interacts with FTIP3 and FTIP4. As to expression, expressed in all four types of shoot apical meristems (SAM) i.e. in vegetative, axillary, inflorescence and floral.

The protein resides in the nucleus. It localises to the cell junction. Its subcellular location is the plasmodesma. The protein localises to the cytoplasm. It is found in the endosome. The protein resides in the cell membrane. Functionally, required for shoot apical meristem (SAM) formation during embryogenesis. Negatively regulates ASYMMETRIC LEAVES1 (AS1) and ASYMMETRIC LEAVES2 (AS2 or LBD6). Probably binds to the DNA sequence 5'-TGAC-3'. Binds to RNA. The sequence is that of Homeobox protein SHOOT MERISTEMLESS from Arabidopsis thaliana (Mouse-ear cress).